Reading from the N-terminus, the 293-residue chain is Ethanolamine ammonia-lyase small subunit (293 aa).

Positions 207 and 228 each coordinate adenosylcob(III)alamin.

The protein belongs to the EutC family. As to quaternary structure, the basic unit is a heterodimer which dimerizes to form tetramers. The heterotetramers trimerize; 6 large subunits form a core ring with 6 small subunits projecting outwards. Requires adenosylcob(III)alamin as cofactor.

Its subcellular location is the bacterial microcompartment. It catalyses the reaction ethanolamine = acetaldehyde + NH4(+). It participates in amine and polyamine degradation; ethanolamine degradation. Catalyzes the deamination of various vicinal amino-alcohols to oxo compounds. Allows this organism to utilize ethanolamine as the sole source of nitrogen and carbon in the presence of external vitamin B12. This is Ethanolamine ammonia-lyase small subunit from Listeria monocytogenes serovar 1/2a (strain ATCC BAA-679 / EGD-e).